Consider the following 157-residue polypeptide: Transcription elongation factor GreA (157 aa).

Belongs to the GreA/GreB family.

Necessary for efficient RNA polymerase transcription elongation past template-encoded arresting sites. The arresting sites in DNA have the property of trapping a certain fraction of elongating RNA polymerases that pass through, resulting in locked ternary complexes. Cleavage of the nascent transcript by cleavage factors such as GreA or GreB allows the resumption of elongation from the new 3'terminus. GreA releases sequences of 2 to 3 nucleotides. This is Transcription elongation factor GreA from Hyphomonas neptunium (strain ATCC 15444).